A 331-amino-acid chain; its full sequence is Cytosolic sulfotransferase 8 (331 aa).

A compositionally biased stretch (basic and acidic residues) spans 1–11 (MGEKDIPRNLK). The interval 1-31 (MGEKDIPRNLKEEEEEEEENQSEETKSLISS) is disordered. Over residues 12–22 (EEEEEEEENQS) the composition is skewed to acidic residues. 80–85 (KSGTTW) contributes to the 3'-phosphoadenylyl sulfate binding site. His-145 serves as the catalytic Proton acceptor. 3'-phosphoadenylyl sulfate is bound by residues Arg-167, Ser-175, Tyr-231, and 297–299 (RKG).

This sequence belongs to the sulfotransferase 1 family. As to expression, expressed in seedlings and roots.

The protein resides in the cytoplasm. Functionally, sulfotransferase that utilizes 3'-phospho-5'-adenylyl sulfate (PAPS) as sulfonate donor. No activity with brassinosteroids. This chain is Cytosolic sulfotransferase 8 (SOT8), found in Arabidopsis thaliana (Mouse-ear cress).